The chain runs to 112 residues: Lutropin subunit beta (112 aa).

6 cysteine pairs are disulfide-bonded: cysteine 4–cysteine 52, cysteine 18–cysteine 67, cysteine 21–cysteine 105, cysteine 29–cysteine 83, cysteine 33–cysteine 85, and cysteine 88–cysteine 95. N-linked (GlcNAc...) asparagine glycosylation is present at asparagine 8.

The protein belongs to the glycoprotein hormones subunit beta family. In terms of assembly, heterodimer of a common alpha chain and a unique beta chain which confers biological specificity to thyrotropin, lutropin, follitropin and gonadotropin.

Its subcellular location is the secreted. The chain is Lutropin subunit beta (lhb) from Aquarana catesbeiana (American bullfrog).